Here is a 187-residue protein sequence, read N- to C-terminus: Auxin-binding protein T85 (187 aa).

The signal sequence occupies residues 1 to 20 (MARHVLVVVAVLLFATAEAS). Cys-22 and Cys-177 are joined by a disulfide. Zn(2+) contacts are provided by His-78, His-80, and Glu-84. Asn-117 carries N-linked (GlcNAc...) asparagine glycosylation. His-128 lines the Zn(2+) pocket. Residues 184 to 187 (KDEL) carry the Prevents secretion from ER motif.

Homodimer.

The protein localises to the endoplasmic reticulum lumen. Functionally, this is probably a receptor for the plant hormone auxin. In Nicotiana tabacum (Common tobacco), this protein is Auxin-binding protein T85 (T85).